The chain runs to 338 residues: Anthocyanidin reductase ((2S)-flavan-3-ol-forming) (338 aa).

Residues 18 to 21, Lys-48, 87 to 90, and Tyr-168 contribute to the NADP(+) site; these read TGFV and VATP.

This sequence belongs to the NAD(P)-dependent epimerase/dehydratase family. Dihydroflavonol-4-reductase subfamily. As to expression, expressed in seeds, grape skins, flowers and leaves.

It catalyses the reaction a (2S,3R)-flavan-3-ol + 2 NADP(+) = an anthocyanidin with a 3-hydroxy group + 2 NADPH + 2 H(+). The enzyme catalyses a (2S,3S)-flavan-3-ol + 2 NADP(+) = an anthocyanidin with a 3-hydroxy group + 2 NADPH + 2 H(+). The protein operates within secondary metabolite biosynthesis; flavonoid biosynthesis. With respect to regulation, inhibited at NaCl concentrations higher than 200 mM. Produces the terminal flavan-3-ol monomers required for the formation of proanthocyanidins or condensed tannins in leaves and flowers, as well as in the skin and seeds of developing berries. Behaves as a reductase and as a C-3 epimerase. Catalyzes the double reduction of anthocyanidins, producing a mixture of (2S,3S)- and (2S,3R)-flavan-3-ols. The enzyme catalyzes sequential hydride transfers to C-2 and C-4, respectively and epimerization at C-3 is achieved by tautomerization that occurs between the two hydride transfers. Converts cyanidin, pelargonidin and delphinidin into catechin and epicatechin, afzelechin and epiafzelechin, and gallocatechin and epigallocatechin respectively. This Vitis vinifera (Grape) protein is Anthocyanidin reductase ((2S)-flavan-3-ol-forming).